Reading from the N-terminus, the 206-residue chain is Large ribosomal subunit protein uL4 (206 aa).

A disordered region spans residues 47-94 (NRAQKGRSEIAKSTRKPFRQKGTGNARAGMASSPLWRGGGKIFPNSPD).

This sequence belongs to the universal ribosomal protein uL4 family. As to quaternary structure, part of the 50S ribosomal subunit.

Its function is as follows. One of the primary rRNA binding proteins, this protein initially binds near the 5'-end of the 23S rRNA. It is important during the early stages of 50S assembly. It makes multiple contacts with different domains of the 23S rRNA in the assembled 50S subunit and ribosome. In terms of biological role, forms part of the polypeptide exit tunnel. The chain is Large ribosomal subunit protein uL4 from Azoarcus sp. (strain BH72).